The sequence spans 440 residues: Glutamyl-tRNA reductase (440 aa).

Residues 50–53, serine 109, 114–116, and glutamine 120 contribute to the substrate site; these read TCNR and EPQ. Catalysis depends on cysteine 51, which acts as the Nucleophile. Position 189 to 194 (189 to 194) interacts with NADP(+); it reads GAGEMA.

It belongs to the glutamyl-tRNA reductase family. As to quaternary structure, homodimer.

The catalysed reaction is (S)-4-amino-5-oxopentanoate + tRNA(Glu) + NADP(+) = L-glutamyl-tRNA(Glu) + NADPH + H(+). It functions in the pathway porphyrin-containing compound metabolism; protoporphyrin-IX biosynthesis; 5-aminolevulinate from L-glutamyl-tRNA(Glu): step 1/2. Catalyzes the NADPH-dependent reduction of glutamyl-tRNA(Glu) to glutamate 1-semialdehyde (GSA). This Nitratidesulfovibrio vulgaris (strain ATCC 29579 / DSM 644 / CCUG 34227 / NCIMB 8303 / VKM B-1760 / Hildenborough) (Desulfovibrio vulgaris) protein is Glutamyl-tRNA reductase.